A 216-amino-acid polypeptide reads, in one-letter code: Imidazole glycerol phosphate synthase subunit HisH (216 aa).

Positions 2–216 (SVAIVDYGSG…LISNFLKWKP (215 aa)) constitute a Glutamine amidotransferase type-1 domain. The Nucleophile role is filled by C88. Active-site residues include H196 and E198.

Heterodimer of HisH and HisF.

It localises to the cytoplasm. The catalysed reaction is 5-[(5-phospho-1-deoxy-D-ribulos-1-ylimino)methylamino]-1-(5-phospho-beta-D-ribosyl)imidazole-4-carboxamide + L-glutamine = D-erythro-1-(imidazol-4-yl)glycerol 3-phosphate + 5-amino-1-(5-phospho-beta-D-ribosyl)imidazole-4-carboxamide + L-glutamate + H(+). The enzyme catalyses L-glutamine + H2O = L-glutamate + NH4(+). Its pathway is amino-acid biosynthesis; L-histidine biosynthesis; L-histidine from 5-phospho-alpha-D-ribose 1-diphosphate: step 5/9. Its function is as follows. IGPS catalyzes the conversion of PRFAR and glutamine to IGP, AICAR and glutamate. The HisH subunit catalyzes the hydrolysis of glutamine to glutamate and ammonia as part of the synthesis of IGP and AICAR. The resulting ammonia molecule is channeled to the active site of HisF. The protein is Imidazole glycerol phosphate synthase subunit HisH of Rhodopseudomonas palustris (strain ATCC BAA-98 / CGA009).